A 383-amino-acid polypeptide reads, in one-letter code: uncharacterized protein (383 aa).

The tract at residues 1–55 is disordered; it reads MSSKLTVNAHYSPLKDEDPLDHIDSQTALDSMETDSTGKSSLYFSKSDDPLSKDI. The span at 13–24 shows a compositional bias: basic and acidic residues; that stretch reads PLKDEDPLDHID. The span at 25–44 shows a compositional bias: polar residues; that stretch reads SQTALDSMETDSTGKSSLYF. Residues 46–55 are compositionally biased toward basic and acidic residues; that stretch reads KSDDPLSKDI. 10 helical membrane-spanning segments follow: residues 87 to 107, 112 to 132, 157 to 177, 179 to 199, 205 to 225, 228 to 248, 262 to 282, 299 to 319, 329 to 349, and 352 to 372; these read LTIF…TILN, NIIN…SLMV, FIFV…FVPV, FYQI…FVLL, LFPF…VRFE, VAPI…IESV, LIYI…VASL, FFIV…ATFT, YMIS…AFLG, and LYGN…LYTL.

The protein belongs to the TPT transporter family.

It is found in the membrane. This is an uncharacterized protein from Schizosaccharomyces pombe (strain 972 / ATCC 24843) (Fission yeast).